A 182-amino-acid polypeptide reads, in one-letter code: UPF0397 protein SPP_0507 (182 aa).

A run of 5 helical transmembrane segments spans residues 10-30 (VVAVGIGAALFVVIGMINIPT), 46-66 (LLSIIFGPIIGLLVGLIGHAI), 73-93 (YGLWWTWIIASGLFGLVVGLF), 109-129 (ILIFNLIQLLANALVWGVLAP), and 148-168 (IVAGIANGVSVAIAGTLLLLA).

The protein belongs to the UPF0397 family.

The protein localises to the cell membrane. The polypeptide is UPF0397 protein SPP_0507 (Streptococcus pneumoniae (strain P1031)).